A 423-amino-acid chain; its full sequence is Diaminobutyrate--2-oxoglutarate transaminase (423 aa).

Lysine 267 is subject to N6-(pyridoxal phosphate)lysine.

Belongs to the class-III pyridoxal-phosphate-dependent aminotransferase family. As to quaternary structure, homohexamer. Pyridoxal 5'-phosphate is required as a cofactor.

The catalysed reaction is L-2,4-diaminobutanoate + 2-oxoglutarate = L-aspartate 4-semialdehyde + L-glutamate. It participates in amine and polyamine biosynthesis; ectoine biosynthesis; L-ectoine from L-aspartate 4-semialdehyde: step 1/3. Catalyzes reversively the conversion of L-aspartate beta-semialdehyde (ASA) to L-2,4-diaminobutyrate (DABA) by transamination with L-glutamate. This is Diaminobutyrate--2-oxoglutarate transaminase (ectB) from Chromohalobacter salexigens (strain ATCC BAA-138 / DSM 3043 / CIP 106854 / NCIMB 13768 / 1H11).